Reading from the N-terminus, the 130-residue chain is Small ribosomal subunit protein eS6 (130 aa).

A disordered region spans residues 78 to 98 (SGPPGFRPERKGERRRKTVRG).

It belongs to the eukaryotic ribosomal protein eS6 family.

The polypeptide is Small ribosomal subunit protein eS6 (Methanopyrus kandleri (strain AV19 / DSM 6324 / JCM 9639 / NBRC 100938)).